Here is a 1061-residue protein sequence, read N- to C-terminus: Ribonuclease E (1061 aa).

In terms of domain architecture, S1 motif spans 39–119 (ANIYKGKITR…GNKGAALTTF (81 aa)). Residues 57 to 112 (FVDYGAERHGFLPLKEIAREYFPANYSAHGRPNIKDVLREGQEVIVQIDKEERGNK) form an interaction with RNA region. Positions 169 to 170 (RT) are interaction with RNA 5'-terminal monophosphate. Mg(2+) contacts are provided by aspartate 303 and aspartate 346. 2 residues coordinate Zn(2+): cysteine 404 and cysteine 407. A required for zinc-mediated homotetramerization and catalytic activity region spans residues 404-407 (CPRC). Disordered regions lie at residues 532–565 (FAMP…PAAP), 586–731 (EETK…KVRY), and 752–822 (EPIV…RYPT). Residues 536–546 (DVPPAPTPAEP) are compositionally biased toward pro residues. Residues 547–565 (AAPVVAPAPKAAPATPAAP) show a composition bias toward low complexity. Basic and acidic residues-rich tracts occupy residues 598-608 (AEAKPERQQDR), 615-640 (NRRD…EENR), and 652-690 (ETRE…KRQA). Basic residues predominate over residues 796–814 (RRSRRSPRHLRVSGQRRRR). Residues 833–850 (ASPELASGKVWIRYPIVR) are interaction with enolase. An interaction with PNPase region spans residues 1021–1061 (EAPRHSDWQRPTFAFEGKGAAGGHTATHHASAAPARPQPVE). The segment at 1031–1061 (PTFAFEGKGAAGGHTATHHASAAPARPQPVE) is disordered. Residues 1043-1055 (GHTATHHASAAPA) show a composition bias toward low complexity.

This sequence belongs to the RNase E/G family. RNase E subfamily. As to quaternary structure, component of the RNA degradosome, which is a multiprotein complex involved in RNA processing and mRNA degradation. Within the RNA degradosome, RNase E assembles into a homotetramer formed by a dimer of dimers. Tetramerization is essential for catalytic activity, but not for RNA-binding. Interacts with RhlB, PNPase (pnp) and enolase (eno). Interacts with DeaD at reduced temperature. Requires Zn(2+) as cofactor. Mg(2+) serves as cofactor.

The protein localises to the cytoplasm. The protein resides in the cell inner membrane. The enzyme catalyses Endonucleolytic cleavage of single-stranded RNA in A- and U-rich regions.. Its activity is regulated as follows. The presence of a 5'-monophosphate on substrate RNA accelerates its cleavage by catalytically activating the enzyme. Binding to the membrane stabilizes protein structure and increases affinity for the substrate. Its function is as follows. Endoribonuclease that plays a central role in RNA processing and decay. Required for the maturation of 5S and 16S rRNAs and the majority of tRNAs. Also involved in the degradation of most mRNAs. Can also process other RNA species, such as RNAI, a molecule that controls the replication of ColE1 plasmid, and the cell division inhibitor DicF-RNA. It initiates the decay of RNAs by cutting them internally near their 5'-end. It is able to remove poly(A) tails by an endonucleolytic process. Required to initiate rRNA degradation during both starvation and quality control; acts after RNase PH (rph) exonucleolytically digests the 3'-end of the 16S rRNA. Degradation of 16S rRNA leads to 23S rRNA degradation. Processes the 3 tRNA(Pro) precursors immediately after the 3'-CCA to generate the mature ends. Functionally, prefers 5'-monophosphorylated substrates over 5'-triphosphorylated substrates. 5'-monophosphate-assisted cleavage requires at least 2 and preferably 3 or more unpaired 5'-terminal nucleotides. The optimal spacing between the 5' end and the scissile phosphate appears to be 8 nucleotides. Any sequence of unpaired nucleotides at the 5'-end is tolerated. This is Ribonuclease E from Escherichia coli (strain K12).